A 1066-amino-acid chain; its full sequence is Cytoplasmic dynein 2 intermediate chain 1 (1066 aa).

Disordered regions lie at residues 22–366 (LWAI…ENAR) and 381–408 (YEDD…LEEL). The residue at position 30 (serine 30) is a Phosphoserine. 5 stretches are compositionally biased toward basic and acidic residues: residues 30-135 (SKEE…EELR), 147-171 (ETRD…RSEE), 180-256 (DEDR…EERH), 264-308 (GFHF…KRDG), and 316-336 (NLVR…HEEG). At serine 247 the chain carries Phosphoserine. 2 stretches are compositionally biased toward acidic residues: residues 351–362 (ETVEIEKEETDL) and 381–397 (YEDD…ESSN). Over residues 399–408 (PESREKLEEL) the composition is skewed to basic and acidic residues. The tract at residues 473–552 (ASHRQKSRTQ…DIQTEEIETR (80 aa)) is binding to the DYNLT2B-DYNLT1/DYNLT3 dimer. WD repeat units follow at residues 694–734 (ICES…RLHY), 775–821 (VHKK…KADI), 907–947 (IRPV…PLLQ), and 952–992 (TDSH…LGPV).

The protein belongs to the dynein light intermediate chain family. As to quaternary structure, intermediate chain of the cytoplasmic dynein complex 2, a multisubunit complex, composed at least of eleven different proteins. The cytoplasmic dynein 2 complex consists of two catalytic heavy chains (HCs) and a number of non-catalytic subunits presented by intermediate chains (ICs), light intermediate chains (LICs) and light chains (LCs). Among them, a heavy chain (DYNC2H1), two intermediate chains (DYNC2I2 and DYNC2I1), a light intermediate chain (DYNC2LI1), and a light chain (DYNLT2B) are unique to the cytoplasmic dynein complex 2, but a subset of the light chains are also shared by dynein-1 and dynein-2 complexes. Interacts with DYNC2I2; their C-terminal domains each bind a copy of the heavy chain, and their extended N-terminal regions are held together by an array of light chain dimers. Interacts with DYNLT2B. Interacts (via the N-terminal half) with DYNLT2B-DYNLT1 dimer or with DYNLT2B-DYNLT3 dimer; this interaction is crucial for retrograde trafficking of ciliary proteins. In terms of tissue distribution, expressed in chondrocytes (at protein level).

It is found in the cell projection. Its subcellular location is the cilium. It localises to the cytoplasm. The protein localises to the cytoskeleton. The protein resides in the microtubule organizing center. It is found in the centrosome. Its function is as follows. Acts as one of several non-catalytic accessory components of the cytoplasmic dynein 2 complex (dynein-2 complex), a motor protein complex that drives the movement of cargos along microtubules within cilia and flagella in concert with the intraflagellar transport (IFT) system. DYNC2I1 plays a major role in retrograde ciliary protein trafficking in cilia and flagella. Also requires to maintain a functional transition zone. This chain is Cytoplasmic dynein 2 intermediate chain 1, found in Homo sapiens (Human).